A 459-amino-acid chain; its full sequence is Serine/threonine-protein kinase 12 (459 aa).

The interval 1–30 is disordered; that stretch reads MEEDYQQPRFTIGRQSSMAPEKIPEPSVHS. ANK repeat units lie at residues 42 to 71, 75 to 104, and 108 to 137; these read DGGV…DANY, DDRT…EVDP, and WGST…KHPM. The Protein kinase domain occupies 102-417; the sequence is VDPKDRWGST…EIIKRLESIL (316 aa). ATP-binding positions include 108-116 and lysine 184; that span reads WGSTPFADA. Aspartate 281 functions as the Proton acceptor in the catalytic mechanism.

It belongs to the protein kinase superfamily. Ser/Thr protein kinase family. Interacts with BLUS1, PHOT1 and PHOT2. Accumulates in leaves, stems, petioles and roots, especially in guard cells.

The protein localises to the cytoplasm. It is found in the cytosol. The catalysed reaction is L-seryl-[protein] + ATP = O-phospho-L-seryl-[protein] + ADP + H(+). It carries out the reaction L-threonyl-[protein] + ATP = O-phospho-L-threonyl-[protein] + ADP + H(+). Its function is as follows. Serine/threonine protein kinase that phosphorylates proteins on serine and threonine residues. Mediates blue light-dependent stomatal opening in guard cells by promoting plasma membrane-type ATPases (AHA1 and AHA2) phosphorylation. This Arabidopsis thaliana (Mouse-ear cress) protein is Serine/threonine-protein kinase 12.